A 306-amino-acid chain; its full sequence is Porphobilinogen deaminase (306 aa).

Cys-239 carries the post-translational modification S-(dipyrrolylmethanemethyl)cysteine.

This sequence belongs to the HMBS family. Monomer. It depends on dipyrromethane as a cofactor.

It catalyses the reaction 4 porphobilinogen + H2O = hydroxymethylbilane + 4 NH4(+). It functions in the pathway porphyrin-containing compound metabolism; protoporphyrin-IX biosynthesis; coproporphyrinogen-III from 5-aminolevulinate: step 2/4. Tetrapolymerization of the monopyrrole PBG into the hydroxymethylbilane pre-uroporphyrinogen in several discrete steps. This chain is Porphobilinogen deaminase, found in Helicobacter pylori (strain HPAG1).